The primary structure comprises 414 residues: Esterase FrsA (414 aa).

The protein belongs to the FrsA family.

It catalyses the reaction a carboxylic ester + H2O = an alcohol + a carboxylate + H(+). Functionally, catalyzes the hydrolysis of esters. The protein is Esterase FrsA of Escherichia coli O8 (strain IAI1).